The sequence spans 159 residues: Ribosomal RNA large subunit methyltransferase H (159 aa).

S-adenosyl-L-methionine is bound by residues L76, G108, and 127-132 (FSPMTF).

The protein belongs to the RNA methyltransferase RlmH family. As to quaternary structure, homodimer.

It is found in the cytoplasm. It catalyses the reaction pseudouridine(1915) in 23S rRNA + S-adenosyl-L-methionine = N(3)-methylpseudouridine(1915) in 23S rRNA + S-adenosyl-L-homocysteine + H(+). Specifically methylates the pseudouridine at position 1915 (m3Psi1915) in 23S rRNA. The polypeptide is Ribosomal RNA large subunit methyltransferase H (Alkaliphilus oremlandii (strain OhILAs) (Clostridium oremlandii (strain OhILAs))).